The primary structure comprises 115 residues: Hydrogenase maturation factor HypA (115 aa).

Histidine 2 serves as a coordination point for Ni(2+). Residues cysteine 74, cysteine 77, cysteine 90, and cysteine 93 each contribute to the Zn(2+) site.

This sequence belongs to the HypA/HybF family.

Its function is as follows. Involved in the maturation of [NiFe] hydrogenases. Required for nickel insertion into the metal center of the hydrogenase. This Desulfosudis oleivorans (strain DSM 6200 / JCM 39069 / Hxd3) (Desulfococcus oleovorans) protein is Hydrogenase maturation factor HypA.